A 200-amino-acid chain; its full sequence is Peptidyl-tRNA hydrolase (200 aa).

Tyr15 is a tRNA binding site. His20 serves as the catalytic Proton acceptor. TRNA is bound by residues Phe66, Asn68, and Asn114.

It belongs to the PTH family. In terms of assembly, monomer.

It localises to the cytoplasm. The enzyme catalyses an N-acyl-L-alpha-aminoacyl-tRNA + H2O = an N-acyl-L-amino acid + a tRNA + H(+). Hydrolyzes ribosome-free peptidyl-tRNAs (with 1 or more amino acids incorporated), which drop off the ribosome during protein synthesis, or as a result of ribosome stalling. Its function is as follows. Catalyzes the release of premature peptidyl moieties from peptidyl-tRNA molecules trapped in stalled 50S ribosomal subunits, and thus maintains levels of free tRNAs and 50S ribosomes. The sequence is that of Peptidyl-tRNA hydrolase from Ralstonia pickettii (strain 12J).